The primary structure comprises 429 residues: Tryptophan synthase beta chain 2 (429 aa).

K111 bears the N6-(pyridoxal phosphate)lysine mark.

This sequence belongs to the TrpB family. As to quaternary structure, tetramer of two alpha and two beta chains. Requires pyridoxal 5'-phosphate as cofactor.

It carries out the reaction (1S,2R)-1-C-(indol-3-yl)glycerol 3-phosphate + L-serine = D-glyceraldehyde 3-phosphate + L-tryptophan + H2O. Its pathway is amino-acid biosynthesis; L-tryptophan biosynthesis; L-tryptophan from chorismate: step 5/5. Its function is as follows. The beta subunit is responsible for the synthesis of L-tryptophan from indole and L-serine. This chain is Tryptophan synthase beta chain 2 (trpB2), found in Saccharolobus solfataricus (strain ATCC 35092 / DSM 1617 / JCM 11322 / P2) (Sulfolobus solfataricus).